Here is a 515-residue protein sequence, read N- to C-terminus: 2,3-bisphosphoglycerate-independent phosphoglycerate mutase (515 aa).

The Mn(2+) site is built by Asp-14 and Ser-63. The active site involves Ser-63. Residues His-124, 154–155 (RD), Arg-186, Arg-192, 259–262 (RADR), and Lys-334 contribute to the substrate site. Mn(2+) contacts are provided by Asp-401, His-405, Asp-442, His-443, and His-460.

It belongs to the BPG-independent phosphoglycerate mutase family. The cofactor is Mg(2+). Requires Mn(2+) as cofactor.

It carries out the reaction (2R)-2-phosphoglycerate = (2R)-3-phosphoglycerate. The protein operates within carbohydrate degradation; glycolysis; pyruvate from D-glyceraldehyde 3-phosphate: step 3/5. Its activity is regulated as follows. Activity is not affected by 2,3-bisphosphoglycerate. Its function is as follows. Catalyzes the interconversion of 2-phosphoglycerate and 3-phosphoglycerate. The sequence is that of 2,3-bisphosphoglycerate-independent phosphoglycerate mutase from Onchocerca volvulus.